Reading from the N-terminus, the 281-residue chain is MLVFQTKLQKYQLATLISSVISNFLIFFATITPAWQVADDLDADRYVQSGLWLYCPGQAQCWYIFSDSLINYYEKVDVCRFFLIGDCRKKLLRTPYFFGWHYAVLILNVISMICMSLCAAAVIFSYVKPARSRISVIMLDVFAGFASLLLCVSLIVFMVNAEMLESKYLIGIKNTYEKEYGYSYYLAGLAFVISVITVLFAALVSTYTFLFPEEVADSEYTLKMSNNQFAVRYNNDLPQPYQPPMSQLSMQIPSTEHGSYIAGAISPRGDFKSQTRHFYSY.

The next 4 helical transmembrane spans lie at 13-33, 104-124, 137-157, and 184-204; these read LATLISSVISNFLIFFATITP, VLILNVISMICMSLCAAAVIF, IMLDVFAGFASLLLCVSLIVF, and YYLAGLAFVISVITVLFAALV.

This sequence belongs to the Clc family.

The protein resides in the membrane. In Caenorhabditis elegans, this protein is Clc-like protein 5 (clc-5).